The chain runs to 146 residues: Oleosin (146 aa).

The residue at position 2 (Ala-2) is an N-acetylalanine. Helical transmembrane passes span 22–42 (ILGF…TGLT), 56–76 (VLIF…VAVA), and 77–97 (GFLS…WLYN). A Proline-knot motif is present at residues 55-66 (PVLIFFSPILIP).

It belongs to the oleosin family. As to expression, expressed in pollen (at protein level).

It localises to the lipid droplet. The protein localises to the membrane. The chain is Oleosin from Pinus elliottii (Slash pine).